The primary structure comprises 170 residues: Adenine phosphoribosyltransferase (170 aa).

It belongs to the purine/pyrimidine phosphoribosyltransferase family. In terms of assembly, homodimer.

Its subcellular location is the cytoplasm. The enzyme catalyses AMP + diphosphate = 5-phospho-alpha-D-ribose 1-diphosphate + adenine. The protein operates within purine metabolism; AMP biosynthesis via salvage pathway; AMP from adenine: step 1/1. Catalyzes a salvage reaction resulting in the formation of AMP, that is energically less costly than de novo synthesis. The protein is Adenine phosphoribosyltransferase of Enterococcus faecalis (strain ATCC 700802 / V583).